A 501-amino-acid polypeptide reads, in one-letter code: DNA nucleotidylexotransferase (501 aa).

Positions 11–17 (KKRKRPV) match the Nuclear localization signal motif. The region spanning 24 to 121 (QVEVKFKEVT…RPVRVETRHS (98 aa)) is the BRCT domain. Positions 249–253 (VGPKT) are involved in DNA binding. A 2'-deoxyribonucleoside 5'-triphosphate is bound by residues 324–329 (GFRRGK) and 333–336 (HDVD). Residues aspartate 334, aspartate 336, and aspartate 426 each coordinate Mg(2+). Residue 441–442 (GW) participates in a 2'-deoxyribonucleoside 5'-triphosphate binding.

It belongs to the DNA polymerase type-X family. Mg(2+) is required as a cofactor.

It localises to the nucleus. The enzyme catalyses DNA(n) + a 2'-deoxyribonucleoside 5'-triphosphate = DNA(n+1) + diphosphate. Template-independent DNA polymerase which catalyzes the random addition of deoxynucleoside 5'-triphosphate to the 3'-end of a DNA initiator. One of the in vivo functions of this enzyme is the addition of nucleotides at the junction (N region) of rearranged Ig heavy chain and T-cell receptor gene segments during the maturation of B- and T-cells. The sequence is that of DNA nucleotidylexotransferase (dntt) from Oncorhynchus mykiss (Rainbow trout).